Consider the following 246-residue polypeptide: Ubiquitin-conjugating enzyme E2 6 (246 aa).

The Cytoplasmic portion of the chain corresponds to 1-224; it reads MATKQAQKRL…LEKQHNDKPN (224 aa). One can recognise a UBC core domain in the interval 5-154; it reads QAQKRLTKEY…FNSTRFKLVF (150 aa). Catalysis depends on Cys87, which acts as the Glycyl thioester intermediate. Residues 225–245 form a helical membrane-spanning segment; that stretch reads GSSSMFYIGVALFLFLVGLFM.

It belongs to the ubiquitin-conjugating enzyme family.

The protein resides in the endoplasmic reticulum membrane. The catalysed reaction is S-ubiquitinyl-[E1 ubiquitin-activating enzyme]-L-cysteine + [E2 ubiquitin-conjugating enzyme]-L-cysteine = [E1 ubiquitin-activating enzyme]-L-cysteine + S-ubiquitinyl-[E2 ubiquitin-conjugating enzyme]-L-cysteine.. It functions in the pathway protein modification; protein ubiquitination. Catalyzes the covalent attachment of ubiquitin to other proteins. Functions in degradation of misfolded or regulated proteins localized in the endoplasmic reticulum (ER) lumen or membrane via the ubiquitin-proteasome system. Cognate E2 conjugating enzyme for the DOA10 ubiquitin ligase complex, which is part of the ERAD-C pathway responsible for the rapid degradation of membrane proteins with misfolded cytoplasmic domains. This is Ubiquitin-conjugating enzyme E2 6 (UBC6) from Candida glabrata (strain ATCC 2001 / BCRC 20586 / JCM 3761 / NBRC 0622 / NRRL Y-65 / CBS 138) (Yeast).